The sequence spans 95 residues: Co-chaperonin GroES (95 aa).

It belongs to the GroES chaperonin family. Heptamer of 7 subunits arranged in a ring. Interacts with the chaperonin GroEL.

It localises to the cytoplasm. In terms of biological role, together with the chaperonin GroEL, plays an essential role in assisting protein folding. The GroEL-GroES system forms a nano-cage that allows encapsulation of the non-native substrate proteins and provides a physical environment optimized to promote and accelerate protein folding. GroES binds to the apical surface of the GroEL ring, thereby capping the opening of the GroEL channel. This Glaesserella parasuis serovar 5 (strain SH0165) (Haemophilus parasuis) protein is Co-chaperonin GroES.